The following is a 123-amino-acid chain: Histone H2B.3 (123 aa).

The tract at residues 1-30 is disordered; it reads MPPKVSGKAAKKAGKAQKNISKGDKKKNRK. O-linked (GlcNAc) serine glycosylation occurs at serine 110. Residue lysine 118 forms a Glycyl lysine isopeptide (Lys-Gly) (interchain with G-Cter in ubiquitin) linkage.

It belongs to the histone H2B family. As to quaternary structure, the nucleosome is a histone octamer containing two molecules each of H2A, H2B, H3 and H4 assembled in one H3-H4 heterotetramer and two H2A-H2B heterodimers. The octamer wraps approximately 147 bp of DNA. Post-translationally, monoubiquitination of Lys-118 gives a specific tag for epigenetic transcriptional activation and is also prerequisite for histone H3 'Lys-4' and 'Lys-79' methylation. In terms of processing, glcNAcylation at Ser-110 promotes monoubiquitination of Lys-118. It fluctuates in response to extracellular glucose, and associates with transcribed genes.

It is found in the nucleus. It localises to the chromosome. Functionally, core component of nucleosome. Nucleosomes wrap and compact DNA into chromatin, limiting DNA accessibility to the cellular machineries which require DNA as a template. Histones thereby play a central role in transcription regulation, DNA repair, DNA replication and chromosomal stability. DNA accessibility is regulated via a complex set of post-translational modifications of histones, also called histone code, and nucleosome remodeling. The sequence is that of Histone H2B.3 from Tigriopus californicus (Marine copepod).